Consider the following 76-residue polypeptide: Conotoxin TxMEKL-011 (76 aa).

The signal sequence occupies residues 1–19 (MEKLTILLLVAAVLMSTQA). A propeptide spanning residues 20-45 (LVERAGENRSKENIKFLLKRKRAADR) is cleaved from the precursor. Disulfide bonds link Cys-51/Cys-65, Cys-58/Cys-69, and Cys-64/Cys-73.

This sequence belongs to the conotoxin O2 superfamily. As to expression, expressed by the venom duct.

The protein resides in the secreted. The protein is Conotoxin TxMEKL-011 of Conus textile (Cloth-of-gold cone).